A 518-amino-acid polypeptide reads, in one-letter code: Bifunctional enzyme NanE/NanK (518 aa).

Positions 1 to 234 are manNAc-6-P epimerase; it reads MCRVQGMIEE…DAVESAAKPS (234 aa). The segment at 235-518 is manNAc kinase; the sequence is SPVLAFDIGG…VADLAATYFS (284 aa). ATP-binding positions include 239–246 and 365–372; these read AFDIGGTK and GIGGGIVL.

In the N-terminal section; belongs to the NanE family. This sequence in the C-terminal section; belongs to the ROK (NagC/XylR) family. NanK subfamily.

The catalysed reaction is an N-acyl-D-glucosamine 6-phosphate = an N-acyl-D-mannosamine 6-phosphate. It carries out the reaction an N-acyl-D-mannosamine + ATP = an N-acyl-D-mannosamine 6-phosphate + ADP + H(+). It functions in the pathway amino-sugar metabolism; N-acetylneuraminate degradation; D-fructose 6-phosphate from N-acetylneuraminate: step 2/5. Its pathway is amino-sugar metabolism; N-acetylneuraminate degradation; D-fructose 6-phosphate from N-acetylneuraminate: step 3/5. Functionally, converts N-acetylmannosamine-6-phosphate (ManNAc-6-P) to N-acetylglucosamine-6-phosphate (GlcNAc-6-P). In terms of biological role, catalyzes the phosphorylation of N-acetylmannosamine (ManNAc) to ManNAc-6-P. This Brucella melitensis biotype 1 (strain ATCC 23456 / CCUG 17765 / NCTC 10094 / 16M) protein is Bifunctional enzyme NanE/NanK (nanEK).